Consider the following 218-residue polypeptide: Pyridoxine/pyridoxamine 5'-phosphate oxidase (218 aa).

Substrate is bound by residues Arg14–Tyr17 and Lys72. Residues Arg67–Lys72, Tyr82–Thr83, Arg88, Lys89, and Gln111 each bind FMN. Substrate is bound by residues Tyr129, Arg133, and Ser137. FMN is bound by residues Gln146 to Ser147 and Trp191. Arg197 to His199 lines the substrate pocket. Arg201 is an FMN binding site.

Belongs to the pyridoxamine 5'-phosphate oxidase family. Homodimer. The cofactor is FMN.

It catalyses the reaction pyridoxamine 5'-phosphate + O2 + H2O = pyridoxal 5'-phosphate + H2O2 + NH4(+). The catalysed reaction is pyridoxine 5'-phosphate + O2 = pyridoxal 5'-phosphate + H2O2. Its pathway is cofactor metabolism; pyridoxal 5'-phosphate salvage; pyridoxal 5'-phosphate from pyridoxamine 5'-phosphate: step 1/1. It functions in the pathway cofactor metabolism; pyridoxal 5'-phosphate salvage; pyridoxal 5'-phosphate from pyridoxine 5'-phosphate: step 1/1. Functionally, catalyzes the oxidation of either pyridoxine 5'-phosphate (PNP) or pyridoxamine 5'-phosphate (PMP) into pyridoxal 5'-phosphate (PLP). The sequence is that of Pyridoxine/pyridoxamine 5'-phosphate oxidase from Escherichia coli O7:K1 (strain IAI39 / ExPEC).